Here is a 549-residue protein sequence, read N- to C-terminus: Acetyl-coenzyme A transporter 1 (549 aa).

Basic and acidic residues predominate over residues 1-12 (MSPTISHKDSSR). Residues 1–46 (MSPTISHKDSSRQRRPGNFSHSLDMKSGPLPPGGWDDSHLDSAGRE) form a disordered region. Residues 1 to 74 (MSPTISHKDS…PQSFRAELSS (74 aa)) are Cytoplasmic-facing. Phosphoserine is present on residues S22 and S42. The span at 36–46 (DDSHLDSAGRE) shows a compositional bias: basic and acidic residues. A helical membrane pass occupies residues 75-95 (ILLLLFLYVLQGIPLGLAGSI). The Extracellular segment spans residues 96-113 (PLILQSKNVSYTDQAFFS). The N-linked (GlcNAc...) asparagine glycan is linked to N103. A helical membrane pass occupies residues 114 to 134 (FVFWPFSLKLLWAPLVDAVYV). At 135-141 (KNFGRRK) the chain is on the cytoplasmic side. Residues 142–162 (SWLVPTQYILGLFMIYLSTQV) form a helical membrane-spanning segment. The Extracellular portion of the chain corresponds to 163–175 (DRLLGNTDDRTPD). The chain crosses the membrane as a helical span at residues 176–196 (VIALTVAFFLFEFLAATQDIA). The Cytoplasmic portion of the chain corresponds to 197–217 (VDGWALTMLSRENVGYASTCN). The helical transmembrane segment at 218–238 (SVGQTAGYFLGNVLFLALESA) threads the bilayer. The Extracellular segment spans residues 239-256 (DFCNKYLRFQPQPRGIVT). Residues 257-277 (LSDFLFFWGTVFLITTTLVAL) form a helical membrane-spanning segment. Residues 278–299 (LKKENEVSVVKEETQGITDTYK) are Cytoplasmic-facing. A helical membrane pass occupies residues 300–320 (LLFAIIKMPAVLTFCLLILTA). Residues 321–343 (KIGFSAADAVTGLKLVEEGVPKE) are Extracellular-facing. Residues 344–364 (HLALLAVPMVPLQIILPLIIS) traverse the membrane as a helical segment. The Cytoplasmic segment spans residues 365–378 (KYTAGPQPLNTFYK). The helical transmembrane segment at 379-398 (AMPYRLLLGLEYALLVWWTP) threads the bilayer. The Extracellular segment spans residues 399-404 (KVEHQG). A helical membrane pass occupies residues 405 to 425 (GFPIYYYIVVLLSYALHQVTV). Residues 426-508 (YSMYVSIMAF…LGGSCVTALD (83 aa)) lie on the Cytoplasmic side of the membrane. The chain crosses the membrane as a helical span at residues 509–529 (GYYVESIICVFIGFGWWFFLG). The Extracellular portion of the chain corresponds to 530–549 (PKFKKLQDEGSSSWKCKRNN).

This sequence belongs to the SLC33A transporter family. Homodimerizes. In terms of tissue distribution, ubiquitous. Detected in heart, brain, placenta, lung, liver, skeletal muscle, kidney and pancreas. With strongest signals in pancreas.

The protein localises to the endoplasmic reticulum membrane. It carries out the reaction acetyl-CoA(in) = acetyl-CoA(out). Functionally, acetyl-CoA transporter that mediates active acetyl-CoA import through the endoplasmic reticulum (ER) membrane into the ER lumen where specific ER-based acetyl-CoA:lysine acetyltransferases are responsible for the acetylation of ER-based protein substrates, such as BACE1. Necessary for O-acetylation of gangliosides. The sequence is that of Acetyl-coenzyme A transporter 1 from Homo sapiens (Human).